The primary structure comprises 1894 residues: Plexin-A1 (1894 aa).

Positions 1–27 are cleaved as a signal peptide; that stretch reads MPLPPLSSRTLLLLLLLLLRGVWIAIS. Positions 28-510 constitute a Sema domain; it reads SPPAGLGPQP…TEKQVTQVPV (483 aa). At 28–1242 the chain is on the extracellular side; that stretch reads SPPAGLGPQP…VYSDSLLTLP (1215 aa). N-linked (GlcNAc...) asparagine glycosylation is present at asparagine 75. Intrachain disulfides connect cysteine 93–cysteine 102, cysteine 128–cysteine 136, cysteine 284–cysteine 405, cysteine 300–cysteine 356, cysteine 374–cysteine 393, cysteine 513–cysteine 530, cysteine 519–cysteine 561, cysteine 522–cysteine 539, cysteine 533–cysteine 545, and cysteine 596–cysteine 615. N-linked (GlcNAc...) asparagine glycosylation is found at asparagine 658, asparagine 670, and asparagine 699. 4 consecutive IPT/TIG domains span residues 862–957, 959–1043, 1046–1145, and 1148–1234; these read PKIL…FTFV, PTFY…YNYT, PTIL…FLYY, and PVLE…LQVY. N-linked (GlcNAc...) asparagine glycosylation occurs at asparagine 1041. Residues asparagine 1185 and asparagine 1210 are each glycosylated (N-linked (GlcNAc...) asparagine). A helical transmembrane segment spans residues 1243 to 1263; the sequence is AIVGIGGGGGLLLLVIVAVLI. Residues 1262-1315 adopt a coiled-coil conformation; the sequence is LIAYKRKSRDADRTLKRLQLQMDNLESRVALECKEAFAELQTDIHELTSDLDGA. Residues 1264–1894 lie on the Cytoplasmic side of the membrane; it reads AYKRKSRDAD…QVVDTMALSS (631 aa).

It belongs to the plexin family. In terms of assembly, interacts directly with NRP1 and NRP2. Interacts with PLXN1B. Interacts with FARP2, RND1 and KDR/VEGFR2. Binding of SEMA3A leads to dissociation of FARP2. Interacts with CRMP1, DPYSL2/CRMP2, DPYSL3/CRMP3 and DPYSL4/CRMP4. Interacts (via TIG domains) with TREM2; the interaction mediates SEMA6D binding and signaling through TYROBP. In terms of tissue distribution, ubiquitous.

It is found in the cell membrane. Its function is as follows. Coreceptor for SEMA3A, SEMA3C, SEMA3F and SEMA6D. Necessary for signaling by class 3 semaphorins and subsequent remodeling of the cytoskeleton. Plays a role in axon guidance, invasive growth and cell migration. Class 3 semaphorins bind to a complex composed of a neuropilin and a plexin. The plexin modulates the affinity of the complex for specific semaphorins, and its cytoplasmic domain is required for the activation of down-stream signaling events in the cytoplasm. Acts as coreceptor of TREM2 for SEMA6D in dendritic cells and is involved in the generation of immune responses and skeletal homeostasis. This Mus musculus (Mouse) protein is Plexin-A1 (Plxna1).